Reading from the N-terminus, the 293-residue chain is Bifunctional protein FolD (293 aa).

Residues 165-167 (GRG), Thr-192, and Val-233 each bind NADP(+).

This sequence belongs to the tetrahydrofolate dehydrogenase/cyclohydrolase family. Homodimer.

It carries out the reaction (6R)-5,10-methylene-5,6,7,8-tetrahydrofolate + NADP(+) = (6R)-5,10-methenyltetrahydrofolate + NADPH. The enzyme catalyses (6R)-5,10-methenyltetrahydrofolate + H2O = (6R)-10-formyltetrahydrofolate + H(+). It functions in the pathway one-carbon metabolism; tetrahydrofolate interconversion. Functionally, catalyzes the oxidation of 5,10-methylenetetrahydrofolate to 5,10-methenyltetrahydrofolate and then the hydrolysis of 5,10-methenyltetrahydrofolate to 10-formyltetrahydrofolate. The protein is Bifunctional protein FolD of Streptomyces griseus subsp. griseus (strain JCM 4626 / CBS 651.72 / NBRC 13350 / KCC S-0626 / ISP 5235).